Here is a 79-residue protein sequence, read N- to C-terminus: Cell division protein ZapB (79 aa).

A coiled-coil region spans residues 3–79; that stretch reads LEVFEKLEAK…QALLGRMEEV (77 aa).

It belongs to the ZapB family. Homodimer. The ends of the coiled-coil dimer bind to each other, forming polymers. Interacts with FtsZ.

Its subcellular location is the cytoplasm. Functionally, non-essential, abundant cell division factor that is required for proper Z-ring formation. It is recruited early to the divisome by direct interaction with FtsZ, stimulating Z-ring assembly and thereby promoting cell division earlier in the cell cycle. Its recruitment to the Z-ring requires functional FtsA or ZipA. The polypeptide is Cell division protein ZapB (Salmonella typhi).